The primary structure comprises 200 residues: NADH-quinone oxidoreductase subunit C (200 aa).

This sequence belongs to the complex I 30 kDa subunit family. In terms of assembly, NDH-1 is composed of 14 different subunits. Subunits NuoB, C, D, E, F, and G constitute the peripheral sector of the complex.

The protein localises to the cell inner membrane. The enzyme catalyses a quinone + NADH + 5 H(+)(in) = a quinol + NAD(+) + 4 H(+)(out). Its function is as follows. NDH-1 shuttles electrons from NADH, via FMN and iron-sulfur (Fe-S) centers, to quinones in the respiratory chain. The immediate electron acceptor for the enzyme in this species is believed to be ubiquinone. Couples the redox reaction to proton translocation (for every two electrons transferred, four hydrogen ions are translocated across the cytoplasmic membrane), and thus conserves the redox energy in a proton gradient. The sequence is that of NADH-quinone oxidoreductase subunit C from Agrobacterium fabrum (strain C58 / ATCC 33970) (Agrobacterium tumefaciens (strain C58)).